A 205-amino-acid polypeptide reads, in one-letter code: Max-like protein homolog 2 (205 aa).

Low complexity-rich tracts occupy residues 1 to 12 (MSRSRSAAASSS) and 26 to 40 (SASS…ATNS). The interval 1 to 58 (MSRSRSAAASSSQKPDDMDLMSPDGSASSPSAPNTPATNSGGFSSDRKKATHLRCERQ) is disordered. Positions 45–58 (SDRKKATHLRCERQ) are enriched in basic and acidic residues. The tract at residues 47-60 (RKKATHLRCERQRR) is basic motif. In terms of domain architecture, bHLH spans 47–101 (RKKATHLRCERQRREAINSGYSDLKDLIPQTTTSLGCKTTNAAILFRACDFMSQL). The helix-loop-helix motif stretch occupies residues 61–101 (EAINSGYSDLKDLIPQTTTSLGCKTTNAAILFRACDFMSQL). A coiled-coil region spans residues 98-132 (MSQLKTDISDADKQLAQLNAQAAALEMIASEYEQM).

In terms of tissue distribution, widely expressed.

Its subcellular location is the nucleus. The protein resides in the cytoplasm. It localises to the mitochondrion. Transcription factor. Binds to the E box motif 5'-CACGTG-3', probably in a heterodimeric complex with mml-1. Involved in modulating longevity in response to TOR signaling, dietary restriction, the decline in protein homeostasis associated with normal aging, germline signaling and the insulin-like signaling pathway. Plays a role in autophagy. Involved in regulating migration of the ray 1 precursor cells in the male tail, acting in concert with Wnt and semaphorin signaling pathways. Regulates transcription of genes encoding extracellular matrix (ECM) components which may contribute to the substratum required for migration of the neighboring ray 1 precursor cells. Required for resistance to oxidative stress. Involved in promoting infection by the microsporidian pathogen N.parisii, probably acting independently of its canonical partner, mml-1. The sequence is that of Max-like protein homolog 2 from Caenorhabditis elegans.